We begin with the raw amino-acid sequence, 423 residues long: Histone deacetylase 14, chloroplastic (423 aa).

The N-terminal 44 residues, 1–44 (MSMALIVRPFFVPGSAGISGSRNICKKNQWRKYLLKPSGSSINC), are a transit peptide targeting the chloroplast. Residues 62-392 (DARLIYSVSA…FRALLGEDSL (331 aa)) form a histone deacetylase region. H202 serves as the catalytic Proton donor/acceptor. D239, H241, and D326 together coordinate Zn(2+).

It belongs to the histone deacetylase family. Interacts with PP2A2. It depends on Zn(2+) as a cofactor. As to expression, expressed in stems, leaves, flowers, siliques and mature seeds.

The protein localises to the nucleus. The protein resides in the cytoplasm. It is found in the plastid. Its subcellular location is the chloroplast stroma. It localises to the mitochondrion. The enzyme catalyses N-acetylserotonin + H2O = serotonin + acetate. It carries out the reaction N-acetyltyramine + H2O = tyramine + acetate. It catalyses the reaction N-acetyltryptamine + H2O = tryptamine + acetate. The catalysed reaction is melatonin + H2O = 5-methoxytryptamine + acetate. Its activity is regulated as follows. Its activity is inhibited by trichostatin A (TSA), a known histone deacetylase inhibitor. Regulates lysine acetylation levels of plastid proteins related to photosynthesis. Involved in the regulation of the activation state of RuBisCO, which is controlled by lysine acetylation of RuBisCO activase under low-light conditions. Associates with alpha- and beta-tubulins and deacetylate alpha-tubulin. Does not seem to be required for the cellular patterning in the root epidermis. Involved in the regulation of melatonin biosynthesis by catalyzing the deacetylation of N-acetylserotonin to produce serotonin. N-acetylserotonin is methylated by acetylserotonin O-methyltransferase (ASMT) to produce melatonin (N-acetyl-5-methoxytryptamine). Deacetylates melatonin to produce 5-methoxytryptamine. In vitro, deacetylates N-acetyltyramine and N-acetyltryptamine to produce tyramine and tryptamine, respectively. The sequence is that of Histone deacetylase 14, chloroplastic from Arabidopsis thaliana (Mouse-ear cress).